A 102-amino-acid polypeptide reads, in one-letter code: Small ribosomal subunit protein uS10 (102 aa).

It belongs to the universal ribosomal protein uS10 family. Part of the 30S ribosomal subunit.

In terms of biological role, involved in the binding of tRNA to the ribosomes. The chain is Small ribosomal subunit protein uS10 from Thermosipho africanus (strain TCF52B).